Reading from the N-terminus, the 252-residue chain is Isoprenyl transferase (252 aa).

Residue Asp-32 is part of the active site. Asp-32 lines the Mg(2+) pocket. Substrate is bound by residues 33-36 (GNGR), Trp-37, Arg-45, His-49, and 77-79 (STE). Asn-80 serves as the catalytic Proton acceptor. Residues Trp-81, Arg-83, Arg-200, and 206–208 (RLS) contribute to the substrate site. Glu-219 is a Mg(2+) binding site.

This sequence belongs to the UPP synthase family. As to quaternary structure, homodimer. Mg(2+) serves as cofactor.

In terms of biological role, catalyzes the condensation of isopentenyl diphosphate (IPP) with allylic pyrophosphates generating different type of terpenoids. The protein is Isoprenyl transferase of Oceanobacillus iheyensis (strain DSM 14371 / CIP 107618 / JCM 11309 / KCTC 3954 / HTE831).